The chain runs to 440 residues: Metacaspase-1 (440 aa).

Residues 1–134 (MFPGSGRKTY…NPQGFGQNSG (134 aa)) are disordered. Pro residues predominate over residues 14-51 (APPPGPPNGYQYGPPPGAQGQYPPPQGYPPQGYPPQGY). Residues 52 to 81 (PPQGYAPQGYPPQGYAPQGYAPQGYQQQGG) show a composition bias toward low complexity. Residues 82–94 (QQQGGQQQGGQQQ) are compositionally biased toward gly residues. The segment covering 98–110 (RQTYATQEAQNFG) has biased composition (polar residues). Residues histidine 230 and cysteine 286 contribute to the active site.

This sequence belongs to the peptidase C14B family.

In terms of biological role, involved in cell death (apoptosis). This is Metacaspase-1 (MCA1) from Debaryomyces hansenii (strain ATCC 36239 / CBS 767 / BCRC 21394 / JCM 1990 / NBRC 0083 / IGC 2968) (Yeast).